A 195-amino-acid chain; its full sequence is MSNIKLIVGLANPGAEYAQTRHNAGAWYVHELARVCNVTLVPESKYYGLAARATLHGRDVRLLIPATFMNLSGKSVAALANFFRILPEEILVAHDELDIEPGVAKFKLGGGHGGHNGLKDIIAQMGNDKGFHRLRIGIGHPGDKNKVSGYVLGKAPASEQEKMDAAIDEAVRATEILFKQDMVKAMNRLHSFKAE.

Position 17 (Tyr-17) interacts with tRNA. Catalysis depends on His-22, which acts as the Proton acceptor. TRNA is bound by residues Phe-68, Asn-70, and Asn-116.

The protein belongs to the PTH family. Monomer.

The protein resides in the cytoplasm. It carries out the reaction an N-acyl-L-alpha-aminoacyl-tRNA + H2O = an N-acyl-L-amino acid + a tRNA + H(+). Functionally, hydrolyzes ribosome-free peptidyl-tRNAs (with 1 or more amino acids incorporated), which drop off the ribosome during protein synthesis, or as a result of ribosome stalling. In terms of biological role, catalyzes the release of premature peptidyl moieties from peptidyl-tRNA molecules trapped in stalled 50S ribosomal subunits, and thus maintains levels of free tRNAs and 50S ribosomes. This Shewanella denitrificans (strain OS217 / ATCC BAA-1090 / DSM 15013) protein is Peptidyl-tRNA hydrolase.